The following is a 307-amino-acid chain: Malonyl-[acyl-carrier protein] O-methyltransferase (307 aa).

It belongs to the methyltransferase superfamily.

The catalysed reaction is malonyl-[ACP] + S-adenosyl-L-methionine = malonyl-[ACP] methyl ester + S-adenosyl-L-homocysteine. Its pathway is cofactor biosynthesis; biotin biosynthesis. In terms of biological role, converts the free carboxyl group of a malonyl-thioester to its methyl ester by transfer of a methyl group from S-adenosyl-L-methionine (SAM). It allows to synthesize pimeloyl-ACP via the fatty acid synthetic pathway. The polypeptide is Malonyl-[acyl-carrier protein] O-methyltransferase (Nitrosospira multiformis (strain ATCC 25196 / NCIMB 11849 / C 71)).